A 1110-amino-acid chain; its full sequence is Ribosome assembly protein 1 (1110 aa).

In terms of domain architecture, tr-type G spans 17–262 (SCIRNICIVA…QKLGAKRENL (246 aa)). Residues 26-33 (AHVDHGKT), 102-106 (DSPGH), and 156-159 (NKID) each bind GTP. Position 431 is a phosphoserine (Ser-431).

It belongs to the TRAFAC class translation factor GTPase superfamily. Classic translation factor GTPase family.

It is found in the cytoplasm. The catalysed reaction is GTP + H2O = GDP + phosphate + H(+). Its activity is regulated as follows. GTPase activity is stimulated in the presence of 60S subunits. GTPase involved in the biogenesis of the 60S ribosomal subunit and translational activation of ribosomes. Together with SDO1, may trigger the GTP-dependent release of TIF6 from 60S pre-ribosomes in the cytoplasm, thereby activating ribosomes for translation competence by allowing 80S ribosome assembly and facilitating TIF6 recycling to the nucleus, where it is required for 60S rRNA processing and nuclear export. Inhibits GTPase activity of ribosome-bound EF-2. This is Ribosome assembly protein 1 (RIA1) from Saccharomyces cerevisiae (strain ATCC 204508 / S288c) (Baker's yeast).